The primary structure comprises 212 residues: Protein Rv0786c (212 aa).

This chain is Protein Rv0786c, found in Mycobacterium tuberculosis (strain ATCC 25618 / H37Rv).